The sequence spans 363 residues: MGSANPDNKNSMTKEEEEACLSAMRLASASVLPMVLKSAIELDLLELIKKSGPGAYVSPSELAAQLPTQNPDAPVMLDRILRLLASYSVLNCTLKDLPDGGIERLYSLAPVCKFLTKNEDGVSMAALLLMNQDKVLMESWYHLKDAVLEGGIPFNKAYGMTAFEYHGKDPRFNKVFNQGMSNHSTIIMKKILEIYQGFQGLKTVVDVGGGTGATLNMIVSKYPSIKGINFDLPHVIEDAPSYPGVDHVGGDMFVSVPKGDAIFMKWICHDWSDAHCLKFLKNCHEALPENGKVILAECLLPEAPDSTLSTQNTVHVDVIMLAHNPGGKERTEKEFEALAKGAGFRGFIKVCCAYNSWIMELLK.

Residue methionine 130 to leucine 136 coordinates substrate. Positions alanine 162–methionine 180 are substrate binding. The S-adenosyl-L-methionine site is built by glycine 208, aspartate 231, aspartate 251, methionine 252, and lysine 265. The active-site Proton acceptor is histidine 269.

Belongs to the class I-like SAM-binding methyltransferase superfamily. Cation-independent O-methyltransferase family. COMT subfamily. Homodimer.

The catalysed reaction is (E)-caffeate + S-adenosyl-L-methionine = (E)-ferulate + S-adenosyl-L-homocysteine + H(+). It participates in aromatic compound metabolism; phenylpropanoid biosynthesis. Functionally, catalyzes the conversion of caffeic acid to ferulic acid and of 5-hydroxyferulic acid to sinapic acid. The resulting products may subsequently be converted to the corresponding alcohols that are incorporated into lignins. The polypeptide is Caffeic acid 3-O-methyltransferase (COMT1) (Catharanthus roseus (Madagascar periwinkle)).